The chain runs to 151 residues: Large ribosomal subunit protein bL9 (151 aa).

This sequence belongs to the bacterial ribosomal protein bL9 family.

Binds to the 23S rRNA. This is Large ribosomal subunit protein bL9 from Azoarcus sp. (strain BH72).